Consider the following 227-residue polypeptide: MVKSSLQRILNSHCFAREKEGDKRSATLHASRTMPLLSQHSRGGCSSESSRVALHCCSNLGPGPRWCSDVPHPPLKIPGGRGNSQRDHSLSASILYSDERLNVTEEPTSNDKTRVLSIQCTLTEAKQVTWRAVWNGGGLYIELPAGPLPEGSKDSFAALLEFAEEQLRADHVFICFPKNREDRAALLRTFSFLGFEIVRPGHPLVPKRPDACFMVYTLEREDPGEED.

The protein belongs to the ODC antizyme family. In terms of assembly, interacts with ODC1 and thereby sterically blocks ODC homodimerization. Forms a ternary complex with PSMB4 and OAZ1 before PSMB4 is incorporated into the 20S proteasome. Interacts with AZIN2; this interaction disrupts the interaction between the antizyme and ODC1. Interacts with FAM171A1.

Its function is as follows. Ornithine decarboxylase (ODC) antizyme protein that negatively regulates ODC activity and intracellular polyamine biosynthesis and uptake in response to increased intracellular polyamine levels. Binds to ODC monomers, inhibiting the assembly of the functional ODC homodimer, and targets the monomers for ubiquitin-independent proteolytic destruction by the 26S proteasome. Triggers ODC degradation by inducing the exposure of a cryptic proteasome-interacting surface of ODC. Stabilizes AZIN2 by interfering with its ubiquitination. Also inhibits cellular uptake of polyamines by inactivating the polyamine uptake transporter. SMAD1/OAZ1/PSMB4 complex mediates the degradation of the CREBBP/EP300 repressor SNIP1. Involved in the translocation of AZIN2 from ER-Golgi intermediate compartment (ERGIC) to the cytosol. The chain is Ornithine decarboxylase antizyme 1 (Oaz1) from Rattus norvegicus (Rat).